We begin with the raw amino-acid sequence, 645 residues long: 1,4-alpha-glucan branching enzyme GlgB (645 aa).

Asp-309 (nucleophile) is an active-site residue. Glu-352 acts as the Proton donor in catalysis. Residues 619-645 (VKTRKGSKKQDGSKTKVRSNVTSRGKR) are disordered. Polar residues predominate over residues 636–645 (RSNVTSRGKR).

The protein belongs to the glycosyl hydrolase 13 family. GlgB subfamily. Monomer.

It catalyses the reaction Transfers a segment of a (1-&gt;4)-alpha-D-glucan chain to a primary hydroxy group in a similar glucan chain.. Its pathway is glycan biosynthesis; glycogen biosynthesis. Catalyzes the formation of the alpha-1,6-glucosidic linkages in glycogen by scission of a 1,4-alpha-linked oligosaccharide from growing alpha-1,4-glucan chains and the subsequent attachment of the oligosaccharide to the alpha-1,6 position. This is 1,4-alpha-glucan branching enzyme GlgB from Bacillus cereus (strain B4264).